The primary structure comprises 264 residues: Thymidylate synthase (264 aa).

Arg21 contacts dUMP. Position 51 (His51) interacts with (6R)-5,10-methylene-5,6,7,8-tetrahydrofolate. Position 126-127 (Arg126–Arg127) interacts with dUMP. The active-site Nucleophile is the Cys146. Residues Arg166 to Asp169, Asn177, and His207 to Tyr209 each bind dUMP. Residue Asp169 coordinates (6R)-5,10-methylene-5,6,7,8-tetrahydrofolate. Residue Ala263 coordinates (6R)-5,10-methylene-5,6,7,8-tetrahydrofolate.

The protein belongs to the thymidylate synthase family. Bacterial-type ThyA subfamily. In terms of assembly, homodimer.

It localises to the cytoplasm. It carries out the reaction dUMP + (6R)-5,10-methylene-5,6,7,8-tetrahydrofolate = 7,8-dihydrofolate + dTMP. The protein operates within pyrimidine metabolism; dTTP biosynthesis. In terms of biological role, catalyzes the reductive methylation of 2'-deoxyuridine-5'-monophosphate (dUMP) to 2'-deoxythymidine-5'-monophosphate (dTMP) while utilizing 5,10-methylenetetrahydrofolate (mTHF) as the methyl donor and reductant in the reaction, yielding dihydrofolate (DHF) as a by-product. This enzymatic reaction provides an intracellular de novo source of dTMP, an essential precursor for DNA biosynthesis. The chain is Thymidylate synthase from Legionella pneumophila (strain Paris).